Consider the following 268-residue polypeptide: Ribosomal RNA large subunit methyltransferase E (268 aa).

Gly50, Trp52, Asp68, Asp84, and Asp109 together coordinate S-adenosyl-L-methionine. The active-site Proton acceptor is the Lys149. Residues 196–254 form the TRAM domain; the sequence is PLRKGDKFVVDIEKLGSSGDGAVLIEGFVVFVKEVEVGEKVRIKISDVKPNFAFADVEE.

The protein belongs to the class I-like SAM-binding methyltransferase superfamily. RNA methyltransferase RlmE family.

The protein localises to the cytoplasm. The catalysed reaction is uridine(2552) in 23S rRNA + S-adenosyl-L-methionine = 2'-O-methyluridine(2552) in 23S rRNA + S-adenosyl-L-homocysteine + H(+). In terms of biological role, specifically methylates the uridine in position 2552 of 23S rRNA at the 2'-O position of the ribose in the fully assembled 50S ribosomal subunit. This Methanosarcina mazei (strain ATCC BAA-159 / DSM 3647 / Goe1 / Go1 / JCM 11833 / OCM 88) (Methanosarcina frisia) protein is Ribosomal RNA large subunit methyltransferase E.